The following is a 329-amino-acid chain: Biotin synthase (329 aa).

The 231-residue stretch at 48 to 278 (FVGDKVYLCS…SKKISVCGGR (231 aa)) folds into the Radical SAM core domain. Residues Cys66, Cys70, and Cys73 each contribute to the [4Fe-4S] cluster site. 2 residues coordinate [2Fe-2S] cluster: Ser143 and Cys203.

The protein belongs to the radical SAM superfamily. Biotin synthase family. In terms of assembly, homodimer. Requires [4Fe-4S] cluster as cofactor. [2Fe-2S] cluster is required as a cofactor.

The catalysed reaction is (4R,5S)-dethiobiotin + (sulfur carrier)-SH + 2 reduced [2Fe-2S]-[ferredoxin] + 2 S-adenosyl-L-methionine = (sulfur carrier)-H + biotin + 2 5'-deoxyadenosine + 2 L-methionine + 2 oxidized [2Fe-2S]-[ferredoxin]. Its pathway is cofactor biosynthesis; biotin biosynthesis; biotin from 7,8-diaminononanoate: step 2/2. Functionally, catalyzes the conversion of dethiobiotin (DTB) to biotin by the insertion of a sulfur atom into dethiobiotin via a radical-based mechanism. The polypeptide is Biotin synthase (Geotalea uraniireducens (strain Rf4) (Geobacter uraniireducens)).